The primary structure comprises 224 residues: Myogenin (224 aa).

Phosphoserine; by CaMK2G occurs at positions 77 and 79. The bHLH domain maps to 81-132 (DRRRAATLREKRRLKKVNEAFEALKRSTLLNPNQRLPKVEILRSAIQYIERL). Threonine 87 carries the post-translational modification Phosphothreonine; by CaMK2G.

In terms of assembly, homodimer and heterodimer with E12; heterodimerization enhances MYOG DNA-binding and transcriptional activities. Interacts with SMARCA4/BRG1/BAF190A. Interacts (via C-terminal region) with SSRP1 and SUPT16H; the interaction is indicative of an interaction with the FACT complex. Interacts with CSRP3. Phosphorylated by CAMK2G on threonine and serine amino acids in a muscle activity-dependent manner. Phosphorylation of Thr-87 impairs both DNA-binding and trans-activation functions in contracting muscles.

It is found in the nucleus. Its function is as follows. Acts as a transcriptional activator that promotes transcription of muscle-specific target genes and plays a role in muscle differentiation, cell cycle exit and muscle atrophy. Essential for the development of functional embryonic skeletal fiber muscle differentiation. However is dispensable for postnatal skeletal muscle growth; phosphorylation by CAMK2G inhibits its transcriptional activity in respons to muscle activity. Required for the recruitment of the FACT complex to muscle-specific promoter regions, thus promoting gene expression initiation. During terminal myoblast differentiation, plays a role as a strong activator of transcription at loci with an open chromatin structure previously initiated by MYOD1. Together with MYF5 and MYOD1, co-occupies muscle-specific gene promoter core regions during myogenesis. Also cooperates with myocyte-specific enhancer factor MEF2D and BRG1-dependent recruitment of SWI/SNF chromatin-remodeling enzymes to alter chromatin structure at myogenic late gene promoters. Facilitates cell cycle exit during terminal muscle differentiation through the up-regulation of miR-20a expression, which in turn represses genes involved in cell cycle progression. Binds to the E-box containing (E1) promoter region of the miR-20a gene. Also plays a role in preventing reversal of muscle cell differentiation. Contributes to the atrophy-related gene expression in adult denervated muscles. Induces fibroblasts to differentiate into myoblasts. This chain is Myogenin (MYOG), found in Homo sapiens (Human).